The chain runs to 355 residues: MAVDFSMRQLLEAGAHFGHQSHRWNPKMQPYIFGTRNNIHIIDLAQTVPALHAALQAVSDTVARGGRVLFVGTKRQAADSIAEAAKRSAQYYVNSRWLGGMLTNWKTISGSIQRLRKVDETLEGGAVGLTKKERLMLTREKDKLEKALGGIKDMGGVPDLLFVIDTNKEQLAIKEAQRLGIPVAAIVDTNCNPDGISYIVPANDDAGRAIALYCDLIARAAIEGIGRGQGALGLDVGASEEPTAEELPPANDDVAVSVASDAIAPADVAALAESTEHFEQLAAPRGAPDDLTKLNGVGPQLVQKLNDAGVWHYWQIAAMQPEDVAKLDADLKLNGRFARDGWVEQSRAFVEASAA.

This sequence belongs to the universal ribosomal protein uS2 family.

The protein is Small ribosomal subunit protein uS2 of Methylorubrum extorquens (strain CM4 / NCIMB 13688) (Methylobacterium extorquens).